The primary structure comprises 284 residues: MNPVLLDGKKLSEKIKEEIRSAIEERKTKNFRIPKLATILVGNNPASETYVSMKVKACHSVGMGSEMIRLREQTTTKELLDVIDKLNSDPNVDGILLQHPTPSGIDERAAFDRIALHKDVDGVTTLSFGKLSMGVETYLPCTPYGMVLLLKEYGIDVAGKNAVVVGRSPILGKPMAMLLTEMNATVTLCHSKTQNLPDIVRNADIIIGAVGKPEFIKADWISNGAILLDAGYNPGNIGDIEISKAKDRSSFYTPVPGGVGPMTIAVLLLQTLYSAKEHFTPPVK.

NADP(+)-binding positions include 166 to 168 (GRS) and Ser191.

This sequence belongs to the tetrahydrofolate dehydrogenase/cyclohydrolase family. In terms of assembly, homodimer.

The catalysed reaction is (6R)-5,10-methylene-5,6,7,8-tetrahydrofolate + NADP(+) = (6R)-5,10-methenyltetrahydrofolate + NADPH. It catalyses the reaction (6R)-5,10-methenyltetrahydrofolate + H2O = (6R)-10-formyltetrahydrofolate + H(+). The protein operates within one-carbon metabolism; tetrahydrofolate interconversion. Functionally, catalyzes the oxidation of 5,10-methylenetetrahydrofolate to 5,10-methenyltetrahydrofolate and then the hydrolysis of 5,10-methenyltetrahydrofolate to 10-formyltetrahydrofolate. The chain is Bifunctional protein FolD from Leptospira interrogans serogroup Icterohaemorrhagiae serovar copenhageni (strain Fiocruz L1-130).